A 409-amino-acid chain; its full sequence is Multifunctional CCA protein (409 aa).

ATP contacts are provided by Gly-8 and Arg-11. CTP contacts are provided by Gly-8 and Arg-11. Mg(2+)-binding residues include Asp-21 and Asp-23. ATP contacts are provided by Arg-91, Arg-137, and Arg-140. The CTP site is built by Arg-91, Arg-137, and Arg-140. The region spanning 228 to 329 is the HD domain; the sequence is TGIHTLMVVE…ITLMDQNDAW (102 aa).

This sequence belongs to the tRNA nucleotidyltransferase/poly(A) polymerase family. Bacterial CCA-adding enzyme type 1 subfamily. Monomer. Can also form homodimers and oligomers. Mg(2+) serves as cofactor. It depends on Ni(2+) as a cofactor.

The enzyme catalyses a tRNA precursor + 2 CTP + ATP = a tRNA with a 3' CCA end + 3 diphosphate. It catalyses the reaction a tRNA with a 3' CCA end + 2 CTP + ATP = a tRNA with a 3' CCACCA end + 3 diphosphate. Functionally, catalyzes the addition and repair of the essential 3'-terminal CCA sequence in tRNAs without using a nucleic acid template. Adds these three nucleotides in the order of C, C, and A to the tRNA nucleotide-73, using CTP and ATP as substrates and producing inorganic pyrophosphate. tRNA 3'-terminal CCA addition is required both for tRNA processing and repair. Also involved in tRNA surveillance by mediating tandem CCA addition to generate a CCACCA at the 3' terminus of unstable tRNAs. While stable tRNAs receive only 3'-terminal CCA, unstable tRNAs are marked with CCACCA and rapidly degraded. The protein is Multifunctional CCA protein of Psychromonas ingrahamii (strain DSM 17664 / CCUG 51855 / 37).